Here is a 239-residue protein sequence, read N- to C-terminus: Tetratricopeptide repeat protein 9B (239 aa).

The segment at Met1–Ala54 is disordered. Phosphoserine occurs at positions 7 and 27. Residues Pro16–Gly32 show a composition bias toward pro residues. Residues Ala63 to Gln97 form a TPR 1 repeat. Positions Gly98 to Ser121 are disordered. The span at Leu104–Ser114 shows a compositional bias: pro residues. Residues Phe169–Asp202 form a TPR 2 repeat.

The protein belongs to the TTC9 family.

The chain is Tetratricopeptide repeat protein 9B (Ttc9b) from Mus musculus (Mouse).